Reading from the N-terminus, the 511-residue chain is 3-octaprenyl-4-hydroxybenzoate carboxy-lyase (511 aa).

Mn(2+) is bound at residue N176. Residues 179–181 (IYR), 193–195 (RWL), and 198–199 (RG) each bind prenylated FMN. E242 provides a ligand contact to Mn(2+). D311 serves as the catalytic Proton donor.

The protein belongs to the UbiD family. Homohexamer. It depends on prenylated FMN as a cofactor. Mn(2+) serves as cofactor.

Its subcellular location is the cell membrane. It catalyses the reaction a 4-hydroxy-3-(all-trans-polyprenyl)benzoate + H(+) = a 2-(all-trans-polyprenyl)phenol + CO2. The protein operates within cofactor biosynthesis; ubiquinone biosynthesis. In terms of biological role, catalyzes the decarboxylation of 3-octaprenyl-4-hydroxy benzoate to 2-octaprenylphenol, an intermediate step in ubiquinone biosynthesis. In Laribacter hongkongensis (strain HLHK9), this protein is 3-octaprenyl-4-hydroxybenzoate carboxy-lyase.